The sequence spans 147 residues: uncharacterized protein (147 aa).

To M.pneumoniae MPN_465.

This is an uncharacterized protein from Mycoplasma pneumoniae (strain ATCC 29342 / M129 / Subtype 1) (Mycoplasmoides pneumoniae).